The chain runs to 476 residues: Serine/threonine-protein kinase Chk1 (476 aa).

The Protein kinase domain maps to 9-265 (WDLVQTLGEG…IPDIKKDRWY (257 aa)). ATP is bound by residues 15-23 (LGEGAYGEV) and Lys-38. Residue Asp-130 is the Proton acceptor of the active site. Positions 272-329 (GTKRGRVSSGGVTESPGALPKHIRSDTDFSPVKSALGEDKASYSTSQPEPGTGGALWD) are disordered. At Ser-280 the chain carries Phosphoserine; by PKB/AKT1. Residue Ser-296 is modified to Phosphoserine. A Phosphoserine; by ATM and ATR modification is found at Ser-317. Ser-345 carries the phosphoserine modification. The tract at residues 391-476 (RSLRDVCEKM…STQKVWLPPP (86 aa)) is autoinhibitory region.

The protein belongs to the protein kinase superfamily. CAMK Ser/Thr protein kinase family. NIM1 subfamily. Phosphorylated by ATR in a RAD17-dependent manner in response to ultraviolet irradiation and inhibition of DNA replication. Phosphorylated by ATM in response to ionizing irradiation. Phosphorylation at Ser-345 induces a change in the conformation of the protein and activates the kinase activity. Phosphorylation at Ser-345 also increases binding to 14-3-3 proteins and promotes nuclear retention.

It is found in the nucleus. Its subcellular location is the chromosome. The protein localises to the cytoplasm. The protein resides in the cytoskeleton. It localises to the microtubule organizing center. It is found in the centrosome. It carries out the reaction L-seryl-[protein] + ATP = O-phospho-L-seryl-[protein] + ADP + H(+). The catalysed reaction is L-threonyl-[protein] + ATP = O-phospho-L-threonyl-[protein] + ADP + H(+). Activated through phosphorylation by atr or atm in response to DNA damage or inhibition of DNA replication. Serine/threonine-protein kinase which is required for checkpoint-mediated cell cycle arrest and activation of DNA repair in response to the presence of DNA damage or unreplicated DNA. May also negatively regulate cell cycle progression during unperturbed cell cycles. This regulation is achieved by a number of mechanisms that together help to preserve the integrity of the genome. Recognizes the substrate consensus sequence [R-X-X-S/T]. Binds to and phosphorylates CDC25A, CDC25B and CDC25C. This inhibits their activity through proteasomal degradation, nucleo-cytoplasmic shuttling and inhibition by proteins of the 13-3-3 family. Inhibition of CDC25 leads to increased inhibitory tyrosine phosphorylation of CDK-cyclin complexes and blocks cell cycle progression. May promote DNA repair, regulate chromatin assembly and the transcription of genes that regulate cell-cycle progression. May also play a role in replication fork maintenance. This is Serine/threonine-protein kinase Chk1 (CHEK1) from Gallus gallus (Chicken).